We begin with the raw amino-acid sequence, 116 residues long: Large ribosomal subunit protein uL18 (116 aa).

It belongs to the universal ribosomal protein uL18 family. Part of the 50S ribosomal subunit; part of the 5S rRNA/L5/L18/L25 subcomplex. Contacts the 5S and 23S rRNAs.

In terms of biological role, this is one of the proteins that bind and probably mediate the attachment of the 5S RNA into the large ribosomal subunit, where it forms part of the central protuberance. This Azotobacter vinelandii (strain DJ / ATCC BAA-1303) protein is Large ribosomal subunit protein uL18.